Reading from the N-terminus, the 210-residue chain is MPQWDLYVVITTKLGGGRPTLELVRGALAGGATAIQLREKELPARELVELGRAIRELTRDAGATFIVNDRLDIALAVEADGLHIGQEDLPAPVARKLLGPEKILGVSAGTTDEARQAEVDGADYLGVGSIFATGSKGDAGSPIGLEGLRAIRAAVKIPIVGIGGINPDNAAGVIAAGADGVSVISAVIGAADVAAAARRLREVVTRARGK.

4-amino-2-methyl-5-(diphosphooxymethyl)pyrimidine is bound by residues 36 to 40 (QLREK) and Asn-68. Positions 69 and 88 each coordinate Mg(2+). A 4-amino-2-methyl-5-(diphosphooxymethyl)pyrimidine-binding site is contributed by Ser-107. 133 to 135 (TGS) is a binding site for 2-[(2R,5Z)-2-carboxy-4-methylthiazol-5(2H)-ylidene]ethyl phosphate. Residue Lys-136 coordinates 4-amino-2-methyl-5-(diphosphooxymethyl)pyrimidine. 2-[(2R,5Z)-2-carboxy-4-methylthiazol-5(2H)-ylidene]ethyl phosphate contacts are provided by residues Gly-164 and 184 to 185 (IS).

It belongs to the thiamine-phosphate synthase family. Mg(2+) serves as cofactor.

It carries out the reaction 2-[(2R,5Z)-2-carboxy-4-methylthiazol-5(2H)-ylidene]ethyl phosphate + 4-amino-2-methyl-5-(diphosphooxymethyl)pyrimidine + 2 H(+) = thiamine phosphate + CO2 + diphosphate. The enzyme catalyses 2-(2-carboxy-4-methylthiazol-5-yl)ethyl phosphate + 4-amino-2-methyl-5-(diphosphooxymethyl)pyrimidine + 2 H(+) = thiamine phosphate + CO2 + diphosphate. It catalyses the reaction 4-methyl-5-(2-phosphooxyethyl)-thiazole + 4-amino-2-methyl-5-(diphosphooxymethyl)pyrimidine + H(+) = thiamine phosphate + diphosphate. Its pathway is cofactor biosynthesis; thiamine diphosphate biosynthesis; thiamine phosphate from 4-amino-2-methyl-5-diphosphomethylpyrimidine and 4-methyl-5-(2-phosphoethyl)-thiazole: step 1/1. In terms of biological role, condenses 4-methyl-5-(beta-hydroxyethyl)thiazole monophosphate (THZ-P) and 2-methyl-4-amino-5-hydroxymethyl pyrimidine pyrophosphate (HMP-PP) to form thiamine monophosphate (TMP). This Moorella thermoacetica (strain ATCC 39073 / JCM 9320) protein is Thiamine-phosphate synthase.